Consider the following 304-residue polypeptide: Calmodulin-lysine N-methyltransferase (304 aa).

Belongs to the class I-like SAM-binding methyltransferase superfamily. CLNMT methyltransferase family. In terms of assembly, monomer. As to expression, expressed in discreet spatial and tissue-specific patterns including root tips, leaves-tips, floral buds, stamens, hydathodes, stigma, anther, siliques, apical meristems and germinating seeds. Also observed at high levels in the root stele region.

The protein localises to the cytoplasm. Its subcellular location is the nucleus. The catalysed reaction is [calmodulin]-L-lysine + S-adenosyl-L-methionine = [calmodulin]-N(6)-methyl-L-lysine + S-adenosyl-L-homocysteine + H(+). Catalyzes the trimethylation of calmodulin. Regulates roots development probably by modulating auxin signaling responses. May be involved in gravitropism. Involved in abscisic acid (ABA)-mediated and abiotic stress responses, including salt (NaCl), cold, drought and heat stresses. This Arabidopsis thaliana (Mouse-ear cress) protein is Calmodulin-lysine N-methyltransferase.